Here is a 322-residue protein sequence, read N- to C-terminus: CXXC-type zinc finger protein 5 (322 aa).

Residues 1–10 (MSSLGGGSQD) show a composition bias toward gly residues. Positions 1 to 100 (MSSLGGGSQD…SGGGSMMGGE (100 aa)) are disordered. Low complexity-rich tracts occupy residues 11-20 (AGGSSSSSTN) and 28-52 (SGPK…VADD). Thr53 bears the Phosphothreonine mark. A compositionally biased stretch (gly residues) spans 87–97 (SSGGSGGGSMM). The CXXC-type zinc-finger motif lies at 256–297 (GKKKRKRCGMCAPCRRRINCEQCSSCRNRKTGHQICKFRKCE). The Nuclear localization signal motif lies at 257-262 (KKKRKR). Residues Cys263, Cys266, Cys269, Cys275, Cys278, Cys281, Cys291, and Cys296 each coordinate Zn(2+).

As to quaternary structure, interacts with DVL1. Interacts with RBPJ.

Its subcellular location is the nucleus. The protein resides in the cytoplasm. May indirectly participate in activation of the NF-kappa-B and MAPK pathways. Acts as a mediator of BMP4-mediated modulation of canonical Wnt signaling activity in neural stem cells. Required for DNA damage-induced ATM phosphorylation, p53 activation and cell cycle arrest. Involved in myelopoiesis. Binds to the oxygen responsive element of COX4I2 and represses its transcription under hypoxia conditions (4% oxygen), as well as normoxia conditions (20% oxygen). May repress COX4I2 transactivation induced by CHCHD2 and RBPJ. Binds preferentially to DNA containing cytidine-phosphate-guanosine (CpG) dinucleotides over CpH (H=A, T, and C), hemimethylated-CpG and hemimethylated-hydroxymethyl-CpG. This Pongo abelii (Sumatran orangutan) protein is CXXC-type zinc finger protein 5 (CXXC5).